Reading from the N-terminus, the 454-residue chain is Oxygen-dependent coproporphyrinogen-III oxidase, mitochondrial (454 aa).

Residues M1–A110 constitute a mitochondrion transit peptide. The disordered stretch occupies residues A43–G70. At S112 the chain carries Phosphoserine. An important for dimerization region spans residues V193–K202. S244 contributes to the coproporphyrinogen III binding site. The active-site Proton donor is the H258. Coproporphyrinogen III is bound at residue N260–R262. Positions Y392–E428 are important for dimerization. Residue K404 is modified to N6-acetyllysine; alternate. K404 carries the post-translational modification N6-succinyllysine; alternate. G411 to R413 is a coproporphyrinogen III binding site.

This sequence belongs to the aerobic coproporphyrinogen-III oxidase family. As to quaternary structure, homodimer.

The protein resides in the mitochondrion intermembrane space. The catalysed reaction is coproporphyrinogen III + O2 + 2 H(+) = protoporphyrinogen IX + 2 CO2 + 2 H2O. It functions in the pathway porphyrin-containing compound metabolism; protoporphyrin-IX biosynthesis; protoporphyrinogen-IX from coproporphyrinogen-III (O2 route): step 1/1. In terms of biological role, catalyzes the aerobic oxidative decarboxylation of propionate groups of rings A and B of coproporphyrinogen-III to yield the vinyl groups in protoporphyrinogen-IX and participates to the sixth step in the heme biosynthetic pathway. In Homo sapiens (Human), this protein is Oxygen-dependent coproporphyrinogen-III oxidase, mitochondrial.